A 927-amino-acid polypeptide reads, in one-letter code: SPX and EXS domain-containing protein 5 (927 aa).

The SPX domain occupies 1 to 460; that stretch reads MKFGKYLESQ…GLSIGSQVMS (460 aa). 4 disordered regions span residues 54-78, 204-239, 257-305, and 326-355; these read KINS…SSSN, KKNK…QHLQ, PIKS…DQDP, and SDNC…GGNN. Low complexity-rich tracts occupy residues 60–78 and 208–224; these read PSPT…SSSN and LNNN…NNNN. Over residues 257–270 the composition is skewed to polar residues; it reads PIKSTPLSPKQQDG. The span at 286–299 shows a compositional bias: acidic residues; that stretch reads LEEEEEEEEEEDDN. The next 8 membrane-spanning stretches (helical) occupy residues 516 to 536, 553 to 573, 597 to 617, 636 to 656, 682 to 702, 769 to 789, 845 to 862, and 869 to 889; these read FFSG…YYFI, VYSA…DCWV, IFQA…VYMW, PLVL…IFQL, FFMG…AQFV, LSIV…DSGW, FVYY…TTWT, and QLTN…IEIL. The region spanning 717 to 927 is the EXS domain; that stretch reads GCIRYARYFN…LPYQIRDNEN (211 aa).

The protein belongs to the SYG1 (TC 2.A.94) family.

It is found in the membrane. The polypeptide is SPX and EXS domain-containing protein 5 (Dictyostelium discoideum (Social amoeba)).